Here is a 465-residue protein sequence, read N- to C-terminus: Ras GTPase-activating protein-binding protein 1 (465 aa).

In terms of domain architecture, NTF2 spans 11-133 (VGREFVRQYY…FYVHNDIFRY (123 aa)). Residues lysine 36, lysine 50, lysine 59, lysine 64, lysine 76, and lysine 123 each participate in a glycyl lysine isopeptide (Lys-Gly) (interchain with G-Cter in ubiquitin) cross-link. An acidic disordered region region spans residues 142–224 (VTEPQEESEE…EAALEEAAPD (83 aa)). Position 143 is a phosphothreonine (threonine 143). Residues 144 to 330 (EPQEESEEEV…GEPGDVEPRR (187 aa)) form a disordered region. Composition is skewed to acidic residues over residues 145 to 157 (PQEE…EEPE) and 184 to 205 (EHLE…EPEP). Phosphoserine is present on serine 149. Phosphoserine occurs at positions 231, 248, and 251. Residues 248–257 (SWASVTSKNL) show a composition bias toward polar residues. Composition is skewed to basic and acidic residues over residues 295-305 (PQRDQRVREQR) and 316-330 (PIRE…EPRR). The region spanning 338-413 (HQLFIGNLPH…VRLNVEEKKT (76 aa)) is the RRM domain. Glycyl lysine isopeptide (Lys-Gly) (interchain with G-Cter in ubiquitin) cross-links involve residues lysine 351 and lysine 355. A Phosphoserine modification is found at serine 371. Residue lysine 374 forms a Glycyl lysine isopeptide (Lys-Gly) (interchain with G-Cter in ubiquitin) linkage. Lysine 374 is subject to N6-acetyllysine; alternate. Lysine 374 is covalently cross-linked (Glycyl lysine isopeptide (Lys-Gly) (interchain with G-Cter in SUMO2); alternate). Lysine 391 participates in a covalent cross-link: Glycyl lysine isopeptide (Lys-Gly) (interchain with G-Cter in ubiquitin); alternate. Residues 408–464 (VEEKKTRAAREGDRRDNRLRGPGGPRGGPSGGMRGPPRGGMVQKPGFGVGRGITTPR) form an RG-rich region region. A compositionally biased stretch (basic and acidic residues) spans 411 to 426 (KKTRAAREGDRRDNRL). Residues 411-465 (KKTRAAREGDRRDNRLRGPGGPRGGPSGGMRGPPRGGMVQKPGFGVGRGITTPRQ) form a disordered region. Arginine 427 carries the asymmetric dimethylarginine modification. Residues 428–445 (GPGGPRGGPSGGMRGPPR) show a composition bias toward gly residues. Arginine 433 is subject to Asymmetric dimethylarginine; alternate. Arginine 433, arginine 445, arginine 458, and arginine 464 each carry omega-N-methylarginine; alternate. Dimethylated arginine; alternate is present on arginine 458.

As to quaternary structure, homodimer and oligomer. Component of a TAU mRNP complex, at least composed of IGF2BP1, ELAVL4 and G3BP1. Binds to the SH3 domain of Ras GTPase-activating protein (RASA1) in proliferating cells. No interaction in quiescent cells. Interacts (via NTF2 domain) with USP10; inhibiting stress granule formation by lowering G3BP1 valence. Interacts (via NTF2 domain) with CAPRIN1; promoting stress granule formation by lowering the saturation-concentration of G3BP1. Interacts (via NTF2 domain) with UBAP2L; promoting stress granule formation. Associates (via RG-rich region) with 40S ribosome subunits. Interacts with RPTOR and SPAG5; this complex is increased by oxidative stress. Interacts with ATXN2L. Interacts with STYXL1. Interacts with CGAS (via N-terminus); this interaction promotes the DNA-binding and activation of CGAS. Interacts (via C-terminus) with RIGI. Interacts with PABPC1. Interacts with QKI (isoforms QKI6 and QKI7); directing N(7)-methylguanine-containing mRNAs to stress granules. The cofactor is Mg(2+). Post-translationally, phosphorylation of the acidic disordered region regulates stress granule assembly. RASA1-dependent phosphorylation of Ser-149 induces a conformational change that prevents self-association. Dephosphorylation after HRAS activation is required for stress granule assembly. Ser-149 phosphorylation induces partial nuclear localization. Arg-435 is dimethylated, probably to asymmetric dimethylarginine. In terms of processing, ubiquitinated by TRIM21 via 'Lys-63'-linked polyubiquitination in the NTF2 domain in response to heat shock, leading to stress granule disassembly: ubiquitination promotes interaction with the FAF2 adapter, followed by interaction with VCP, which extracts G3BP1 from stress granules, leading to stress granule disassembly. In case of prolonged stress, ubiquitination by TRIM21 leads to autophagy-dependent degradation of G3BP1 via recruitment of ubiquitinated G3BP1 by SQSTM1 and/or CALCOCO2 to autophagosomes. As to expression, ubiquitous.

It localises to the cytoplasm. It is found in the cytosol. The protein resides in the perikaryon. The protein localises to the stress granule. Its subcellular location is the nucleus. It catalyses the reaction ATP + H2O = ADP + phosphate + H(+). With respect to regulation, under physiological conditions, G3BP1 adopts a compact state that is stabilized by intramolecular interactions between the RG-rich and the acidic regions that inhibit phase separation. Upon stress, polysomes disassemble and mRNAs are released in an unfolded protein-free state. Binding of unfolded mRNA to G3BP1 outcompetes the intramolecular interactions and RNA-bound G3BP1 adopts an expanded conformation in which the RG-rich region becomes exposed to engage in protein-protein and protein-RNA interactions, allowing physical cross-linking of RNA molecules to form protein-RNA condensates, leading to liquid-liquid phase separation (LLPS). In terms of biological role, protein involved in various processes, such as stress granule formation and innate immunity. Plays an essential role in stress granule formation. Stress granules are membraneless compartments that store mRNAs and proteins, such as stalled translation pre-initiation complexes, in response to stress. Promotes formation of stress granules phase-separated membraneless compartment by undergoing liquid-liquid phase separation (LLPS) upon unfolded RNA-binding: functions as a molecular switch that triggers RNA-dependent LLPS in response to a rise in intracellular free RNA concentrations. Also acts as an ATP- and magnesium-dependent helicase: unwinds DNA/DNA, RNA/DNA, and RNA/RNA substrates with comparable efficiency. Acts unidirectionally by moving in the 5' to 3' direction along the bound single-stranded DNA. Unwinds preferentially partial DNA and RNA duplexes having a 17 bp annealed portion and either a hanging 3' tail or hanging tails at both 5'- and 3'-ends. Plays an essential role in innate immunity by promoting CGAS and RIGI activity. Participates in the DNA-triggered cGAS/STING pathway by promoting the DNA binding and activation of CGAS. Triggers the condensation of cGAS, a process probably linked to the formation of membrane-less organelles. Also enhances RIGI-induced type I interferon production probably by helping RIGI at sensing pathogenic RNA. May also act as a phosphorylation-dependent sequence-specific endoribonuclease in vitro: Cleaves exclusively between cytosine and adenine and cleaves MYC mRNA preferentially at the 3'-UTR. The polypeptide is Ras GTPase-activating protein-binding protein 1 (G3bp1) (Mus musculus (Mouse)).